The chain runs to 613 residues: Glutathione S-transferase C-terminal domain-containing protein (613 aa).

In terms of domain architecture, GST C-terminal spans 116-312; that stretch reads LGFKKTCLKA…QQVPGVRFAA (197 aa).

The protein belongs to the GSTCD family.

The protein resides in the cytoplasm. The chain is Glutathione S-transferase C-terminal domain-containing protein (gstcd) from Xenopus laevis (African clawed frog).